Reading from the N-terminus, the 303-residue chain is UDP-3-O-acyl-N-acetylglucosamine deacetylase (303 aa).

Residues His78, His237, and Asp241 each contribute to the Zn(2+) site. The active-site Proton donor is His264.

Belongs to the LpxC family. Zn(2+) is required as a cofactor.

The enzyme catalyses a UDP-3-O-[(3R)-3-hydroxyacyl]-N-acetyl-alpha-D-glucosamine + H2O = a UDP-3-O-[(3R)-3-hydroxyacyl]-alpha-D-glucosamine + acetate. Its pathway is glycolipid biosynthesis; lipid IV(A) biosynthesis; lipid IV(A) from (3R)-3-hydroxytetradecanoyl-[acyl-carrier-protein] and UDP-N-acetyl-alpha-D-glucosamine: step 2/6. Its function is as follows. Catalyzes the hydrolysis of UDP-3-O-myristoyl-N-acetylglucosamine to form UDP-3-O-myristoylglucosamine and acetate, the committed step in lipid A biosynthesis. The sequence is that of UDP-3-O-acyl-N-acetylglucosamine deacetylase from Xanthomonas campestris pv. campestris (strain B100).